A 101-amino-acid polypeptide reads, in one-letter code: Stefin-C (101 aa).

An N-acetylmethionine modification is found at M1. The short motif at 49 to 53 (QVVAG) is the Secondary area of contact element.

This sequence belongs to the cystatin family.

Its subcellular location is the cytoplasm. In terms of biological role, strong inhibitor of papain and cathepsin L but poor inhibitor of cathepsin B. The protein is Stefin-C of Bos taurus (Bovine).